The following is a 148-amino-acid chain: 3-dehydroquinate dehydratase (148 aa).

The active-site Proton acceptor is Y22. 3 residues coordinate substrate: N73, H79, and D86. H99 functions as the Proton donor in the catalytic mechanism. Residues 100 to 101 (LS) and R110 contribute to the substrate site.

This sequence belongs to the type-II 3-dehydroquinase family. As to quaternary structure, homododecamer.

The enzyme catalyses 3-dehydroquinate = 3-dehydroshikimate + H2O. Its pathway is metabolic intermediate biosynthesis; chorismate biosynthesis; chorismate from D-erythrose 4-phosphate and phosphoenolpyruvate: step 3/7. Its function is as follows. Catalyzes a trans-dehydration via an enolate intermediate. This chain is 3-dehydroquinate dehydratase, found in Prochlorococcus marinus (strain MIT 9211).